A 480-amino-acid chain; its full sequence is Zinc finger protein ztf-6 (480 aa).

4 disordered regions span residues cysteine 92–valine 160, glycine 174–aspartate 198, leucine 282–serine 307, and aspartate 328–proline 351. 4 stretches are compositionally biased toward low complexity: residues serine 95 to histidine 105, serine 131 to valine 145, glycine 174 to serine 187, and serine 286 to serine 296. 2 C2H2-type zinc fingers span residues tyrosine 359 to histidine 383 and phenylalanine 388 to histidine 410. The C2H2-type 3; degenerate zinc finger occupies tyrosine 416–cysteine 441. Positions alanine 461–proline 480 are disordered.

Functionally, probable transcription factor, involved in regulation of dopamine neuron lineage specification. May play a role in maintaining robustness of the Wnt/beta-catenin asymmetry pathway. The polypeptide is Zinc finger protein ztf-6 (Caenorhabditis elegans).